Consider the following 426-residue polypeptide: 3-phosphoshikimate 1-carboxyvinyltransferase (426 aa).

3 residues coordinate 3-phosphoshikimate: lysine 22, serine 23, and arginine 27. Lysine 22 contributes to the phosphoenolpyruvate binding site. Glycine 96 and arginine 124 together coordinate phosphoenolpyruvate. 3-phosphoshikimate contacts are provided by serine 170, serine 171, glutamine 172, serine 198, aspartate 314, asparagine 337, and lysine 341. Glutamine 172 lines the phosphoenolpyruvate pocket. Aspartate 314 (proton acceptor) is an active-site residue. 3 residues coordinate phosphoenolpyruvate: arginine 345, arginine 387, and lysine 412.

It belongs to the EPSP synthase family. Monomer.

It is found in the cytoplasm. It carries out the reaction 3-phosphoshikimate + phosphoenolpyruvate = 5-O-(1-carboxyvinyl)-3-phosphoshikimate + phosphate. Its pathway is metabolic intermediate biosynthesis; chorismate biosynthesis; chorismate from D-erythrose 4-phosphate and phosphoenolpyruvate: step 6/7. Its function is as follows. Catalyzes the transfer of the enolpyruvyl moiety of phosphoenolpyruvate (PEP) to the 5-hydroxyl of shikimate-3-phosphate (S3P) to produce enolpyruvyl shikimate-3-phosphate and inorganic phosphate. This Aliivibrio fischeri (strain ATCC 700601 / ES114) (Vibrio fischeri) protein is 3-phosphoshikimate 1-carboxyvinyltransferase.